The primary structure comprises 967 residues: Leucine--tRNA ligase (967 aa).

The 'HIGH' region motif lies at 43–53 (PYLSGHLHVGH). The short motif at 650-654 (KMSKS) is the 'KMSKS' region element. Residue Lys-653 coordinates ATP.

Belongs to the class-I aminoacyl-tRNA synthetase family.

The protein resides in the cytoplasm. It catalyses the reaction tRNA(Leu) + L-leucine + ATP = L-leucyl-tRNA(Leu) + AMP + diphosphate. The chain is Leucine--tRNA ligase from Pyrococcus abyssi (strain GE5 / Orsay).